Here is a 196-residue protein sequence, read N- to C-terminus: GTP cyclohydrolase-2 (196 aa).

GTP is bound at residue 49–53 (RVHSE). Positions 54, 65, and 67 each coordinate Zn(2+). Residues Gln-70, 92–94 (EGR), and Thr-114 each bind GTP. The Proton acceptor role is filled by Asp-126. The Nucleophile role is filled by Arg-128. 2 residues coordinate GTP: Thr-149 and Lys-154.

This sequence belongs to the GTP cyclohydrolase II family. As to quaternary structure, homodimer. Zn(2+) is required as a cofactor.

The enzyme catalyses GTP + 4 H2O = 2,5-diamino-6-hydroxy-4-(5-phosphoribosylamino)-pyrimidine + formate + 2 phosphate + 3 H(+). It participates in cofactor biosynthesis; riboflavin biosynthesis; 5-amino-6-(D-ribitylamino)uracil from GTP: step 1/4. Catalyzes the conversion of GTP to 2,5-diamino-6-ribosylamino-4(3H)-pyrimidinone 5'-phosphate (DARP), formate and pyrophosphate. The polypeptide is GTP cyclohydrolase-2 (Shigella boydii serotype 18 (strain CDC 3083-94 / BS512)).